A 538-amino-acid polypeptide reads, in one-letter code: Hydroxylamine reductase (538 aa).

Positions 3, 6, 15, and 21 each coordinate [4Fe-4S] cluster. Hybrid [4Fe-2O-2S] cluster contacts are provided by histidine 239, glutamate 263, cysteine 307, cysteine 394, cysteine 422, cysteine 447, glutamate 481, and lysine 483. The residue at position 394 (cysteine 394) is a Cysteine persulfide.

This sequence belongs to the HCP family. It depends on [4Fe-4S] cluster as a cofactor. The cofactor is hybrid [4Fe-2O-2S] cluster.

The protein localises to the cytoplasm. The enzyme catalyses A + NH4(+) + H2O = hydroxylamine + AH2 + H(+). Its function is as follows. Catalyzes the reduction of hydroxylamine to form NH(3) and H(2)O. The sequence is that of Hydroxylamine reductase from Solidesulfovibrio magneticus (strain ATCC 700980 / DSM 13731 / RS-1) (Desulfovibrio magneticus).